Consider the following 95-residue polypeptide: Aspartyl/glutamyl-tRNA(Asn/Gln) amidotransferase subunit C (95 aa).

It belongs to the GatC family. Heterotrimer of A, B and C subunits.

The enzyme catalyses L-glutamyl-tRNA(Gln) + L-glutamine + ATP + H2O = L-glutaminyl-tRNA(Gln) + L-glutamate + ADP + phosphate + H(+). It catalyses the reaction L-aspartyl-tRNA(Asn) + L-glutamine + ATP + H2O = L-asparaginyl-tRNA(Asn) + L-glutamate + ADP + phosphate + 2 H(+). In terms of biological role, allows the formation of correctly charged Asn-tRNA(Asn) or Gln-tRNA(Gln) through the transamidation of misacylated Asp-tRNA(Asn) or Glu-tRNA(Gln) in organisms which lack either or both of asparaginyl-tRNA or glutaminyl-tRNA synthetases. The reaction takes place in the presence of glutamine and ATP through an activated phospho-Asp-tRNA(Asn) or phospho-Glu-tRNA(Gln). In Methylorubrum populi (strain ATCC BAA-705 / NCIMB 13946 / BJ001) (Methylobacterium populi), this protein is Aspartyl/glutamyl-tRNA(Asn/Gln) amidotransferase subunit C.